An 83-amino-acid polypeptide reads, in one-letter code: Large ribosomal subunit protein bL28 (83 aa).

Belongs to the bacterial ribosomal protein bL28 family.

The chain is Large ribosomal subunit protein bL28 from Amoebophilus asiaticus (strain 5a2).